Consider the following 443-residue polypeptide: Histidinol dehydrogenase (443 aa).

Tyrosine 141, glutamine 203, and asparagine 226 together coordinate NAD(+). Residues serine 249, glutamine 271, and histidine 274 each contribute to the substrate site. Zn(2+)-binding residues include glutamine 271 and histidine 274. Residues glutamate 339 and histidine 340 each act as proton acceptor in the active site. Positions 340, 373, 427, and 432 each coordinate substrate. Zn(2+) is bound at residue aspartate 373. Histidine 432 is a binding site for Zn(2+).

It belongs to the histidinol dehydrogenase family. The cofactor is Zn(2+).

The catalysed reaction is L-histidinol + 2 NAD(+) + H2O = L-histidine + 2 NADH + 3 H(+). Its pathway is amino-acid biosynthesis; L-histidine biosynthesis; L-histidine from 5-phospho-alpha-D-ribose 1-diphosphate: step 9/9. Catalyzes the sequential NAD-dependent oxidations of L-histidinol to L-histidinaldehyde and then to L-histidine. In Chlorobium luteolum (strain DSM 273 / BCRC 81028 / 2530) (Pelodictyon luteolum), this protein is Histidinol dehydrogenase.